Here is an 871-residue protein sequence, read N- to C-terminus: Alanine--tRNA ligase (871 aa).

Zn(2+) is bound by residues H561, H565, C665, and H669.

Belongs to the class-II aminoacyl-tRNA synthetase family. Zn(2+) is required as a cofactor.

It is found in the cytoplasm. The catalysed reaction is tRNA(Ala) + L-alanine + ATP = L-alanyl-tRNA(Ala) + AMP + diphosphate. Its function is as follows. Catalyzes the attachment of alanine to tRNA(Ala) in a two-step reaction: alanine is first activated by ATP to form Ala-AMP and then transferred to the acceptor end of tRNA(Ala). Also edits incorrectly charged Ser-tRNA(Ala) and Gly-tRNA(Ala) via its editing domain. This Dehalococcoides mccartyi (strain CBDB1) protein is Alanine--tRNA ligase.